A 120-amino-acid polypeptide reads, in one-letter code: Glycine cleavage system H protein (120 aa).

A Lipoyl-binding domain is found at D20–D102. Position 61 is an N6-lipoyllysine (K61).

This sequence belongs to the GcvH family. The glycine cleavage system is composed of four proteins: P, T, L and H. Requires (R)-lipoate as cofactor.

In terms of biological role, the glycine cleavage system catalyzes the degradation of glycine. The H protein shuttles the methylamine group of glycine from the P protein to the T protein. This is Glycine cleavage system H protein from Deinococcus radiodurans (strain ATCC 13939 / DSM 20539 / JCM 16871 / CCUG 27074 / LMG 4051 / NBRC 15346 / NCIMB 9279 / VKM B-1422 / R1).